Consider the following 177-residue polypeptide: VQ motif-containing protein 11 (177 aa).

A VQ motif is present at residues Phe-25 to Gly-34. 5 positions are modified to phosphoserine: Ser-43, Ser-99, Ser-115, Ser-142, and Ser-145. The segment covering Ser-115 to Ala-133 has biased composition (basic and acidic residues). The interval Ser-115–Ser-177 is disordered. Low complexity predominate over residues Glu-148 to Leu-159. Ser-161 bears the Phosphoserine mark. The segment covering Arg-168–Ser-177 has biased composition (basic and acidic residues).

Phosphorylated on serine residues by MPK6.

It is found in the nucleus. Its function is as follows. May modulate WRKY transcription factor activities. The protein is VQ motif-containing protein 11 of Arabidopsis thaliana (Mouse-ear cress).